Reading from the N-terminus, the 263-residue chain is Cytochrome c oxidase subunit 3 (263 aa).

A run of 7 helical transmembrane segments spans residues 9-29 (PFHM…AMIL), 40-60 (FNMN…IQWW), 84-104 (GMIL…WAFF), 129-149 (IQIP…ITWA), 161-181 (ALQG…LQMY), 198-218 (TFFV…TFLL), and 241-261 (AWYW…IYWW).

This sequence belongs to the cytochrome c oxidase subunit 3 family. Component of the cytochrome c oxidase (complex IV, CIV), a multisubunit enzyme composed of a catalytic core of 3 subunits and several supernumerary subunits. The complex exists as a monomer or a dimer and forms supercomplexes (SCs) in the inner mitochondrial membrane with ubiquinol-cytochrome c oxidoreductase (cytochrome b-c1 complex, complex III, CIII).

Its subcellular location is the mitochondrion inner membrane. It carries out the reaction 4 Fe(II)-[cytochrome c] + O2 + 8 H(+)(in) = 4 Fe(III)-[cytochrome c] + 2 H2O + 4 H(+)(out). Component of the cytochrome c oxidase, the last enzyme in the mitochondrial electron transport chain which drives oxidative phosphorylation. The respiratory chain contains 3 multisubunit complexes succinate dehydrogenase (complex II, CII), ubiquinol-cytochrome c oxidoreductase (cytochrome b-c1 complex, complex III, CIII) and cytochrome c oxidase (complex IV, CIV), that cooperate to transfer electrons derived from NADH and succinate to molecular oxygen, creating an electrochemical gradient over the inner membrane that drives transmembrane transport and the ATP synthase. Cytochrome c oxidase is the component of the respiratory chain that catalyzes the reduction of oxygen to water. Electrons originating from reduced cytochrome c in the intermembrane space (IMS) are transferred via the dinuclear copper A center (CU(A)) of subunit 2 and heme A of subunit 1 to the active site in subunit 1, a binuclear center (BNC) formed by heme A3 and copper B (CU(B)). The BNC reduces molecular oxygen to 2 water molecules using 4 electrons from cytochrome c in the IMS and 4 protons from the mitochondrial matrix. This is Cytochrome c oxidase subunit 3 (COIII) from Locusta migratoria (Migratory locust).